Reading from the N-terminus, the 700-residue chain is Elongation factor G 2 (700 aa).

The region spanning 8–290 is the tr-type G domain; sequence ERYRNIGISA…AVIDFLPSPV (283 aa). GTP is bound by residues 17 to 24, 88 to 92, and 142 to 145; these read AHIDAGKT, DTPGH, and NKMD.

It belongs to the TRAFAC class translation factor GTPase superfamily. Classic translation factor GTPase family. EF-G/EF-2 subfamily.

The protein resides in the cytoplasm. Its function is as follows. Catalyzes the GTP-dependent ribosomal translocation step during translation elongation. During this step, the ribosome changes from the pre-translocational (PRE) to the post-translocational (POST) state as the newly formed A-site-bound peptidyl-tRNA and P-site-bound deacylated tRNA move to the P and E sites, respectively. Catalyzes the coordinated movement of the two tRNA molecules, the mRNA and conformational changes in the ribosome. This chain is Elongation factor G 2, found in Burkholderia mallei (strain ATCC 23344).